Consider the following 496-residue polypeptide: MEKSQGYLELDKSWRHGFLYPLIFQEYIYALAHEQGLNRSILLENTDHDNKYSSLIVKRLITLIHQQNHFLIFDNDSNQNPFWKHNNNLYSQTISEGFVIIVEIPFSPRFVDSLEEKKKILKSNNLRSIHSIFPFLEDQILHLNFVANILIPYPIHLEIVVQSLRYRVKDASSLHLLRFFLFTLNKSISSFSKRNQRFFLFLYNSHVYEYESTFLFLRNKTSHLRSTSSGAFLERIFFYGKIKHLIEVFANDFQAILWLFKDPFMHYVRYQGKSILASKRTSLRMNKWKYYLVNFWQCQFYVWSQPGRVSINQLSNHSLDFLGYLSSVRRNPLAVRSQMLENSFLTDNAIKKFDIIVLLISLIGSLAKAKFCNVLGHPLSKPARADSSDSDIIERFVRICRNLSHYHSGSSKKKSLYRIKYILRLSCARTLARKHKTTVRSFLKRLGSELLEEFLTEDGQVISLIFPRTSSTSWRLYRGGIWYLDITCINDLANHE.

This sequence belongs to the intron maturase 2 family. MatK subfamily.

It localises to the plastid. Its subcellular location is the chloroplast. Usually encoded in the trnK tRNA gene intron. Probably assists in splicing its own and other chloroplast group II introns. The sequence is that of Maturase K from Paeonia lactiflora (Chinese peony).